The sequence spans 23 residues: Augerpeptide hhe7a (23 aa).

3 disulfide bridges follow: C3–C11, C6–C19, and C10–C22.

In terms of tissue distribution, expressed by the venom duct.

It localises to the secreted. In terms of biological role, causes abnormal twist followed by immobility when injected into C.elegans. In Hastula hectica (Sea snail), this protein is Augerpeptide hhe7a.